Here is a 396-residue protein sequence, read N- to C-terminus: MAEVDTFLFTSESVNEGHPDKLCDQISDAVLDACLAEDPESKVACETCTKTNMVMVFGEITTKANVDYEKIVRDTCRGIGFVSNDVGLDAEHCKVLVNIEQQSPDIAQGVHGHFTKRPEEIGAGDQGHMFGYATDETPELMPLSHVLATKLGARLTEVRKNGACAWLRPDGKTQVTVEYQNDNGAMVPLRVHTVLISTQHDETVTNDEIAADLKEHVIKPVIPEQYLDEKTIFHLNPSGRFVIGGPHGDAGLTGRKIIIDTYGGWGAHGGGAFSGKDPTKVDRSGAYIARQAAKSIVANGLARRCIVQVSYAIGVPEPLSVFVDTYGTGKIPDREILRIVTENFDFRPGMIIINLDLMRGGNGRYLKTAAYGHFGREDPDFTWEVVKPLKWEEPSA.

Glu12 provides a ligand contact to Mg(2+). Residue His18 participates in ATP binding. Glu46 provides a ligand contact to K(+). L-methionine contacts are provided by Glu59 and Gln102. Residues Asp170 to Lys172, Ser238 to Phe241, Asp249, Arg255 to Lys256, Ala272, Lys276, and Lys280 each bind ATP. An L-methionine-binding site is contributed by Asp249. Lys280 is a binding site for L-methionine.

This sequence belongs to the AdoMet synthase family. As to quaternary structure, homotetramer. Mn(2+) serves as cofactor. Mg(2+) is required as a cofactor. Requires Co(2+) as cofactor. It depends on K(+) as a cofactor.

It is found in the cytoplasm. It carries out the reaction L-methionine + ATP + H2O = S-adenosyl-L-methionine + phosphate + diphosphate. It functions in the pathway amino-acid biosynthesis; S-adenosyl-L-methionine biosynthesis; S-adenosyl-L-methionine from L-methionine: step 1/1. Its function is as follows. Catalyzes the formation of S-adenosylmethionine from methionine and ATP. The reaction comprises two steps that are both catalyzed by the same enzyme: formation of S-adenosylmethionine (AdoMet) and triphosphate, and subsequent hydrolysis of the triphosphate. This chain is S-adenosylmethionine synthase 3 (METK3), found in Oryza sativa subsp. japonica (Rice).